Consider the following 206-residue polypeptide: MTRRLIRFYDPVRMKAERKTSETEIKLEMNLHGTGQYRFDTEIPFFEHMLSHISKHGLIDLNLWLRGDIEIDCHHSVEDTAILMGTTIHKQLGDKAGIFRYGHFTLTMDEVLTTVAVDLGGRYFFKYTGPELTGKFGIYDAELSLEFLQKLALNAKMNLHVFVHYGDNKHHVHESIFKALGKALRMAIAQDSATAGAIPSTKGVLE.

Belongs to the imidazoleglycerol-phosphate dehydratase family.

The protein resides in the cytoplasm. The catalysed reaction is D-erythro-1-(imidazol-4-yl)glycerol 3-phosphate = 3-(imidazol-4-yl)-2-oxopropyl phosphate + H2O. It participates in amino-acid biosynthesis; L-histidine biosynthesis; L-histidine from 5-phospho-alpha-D-ribose 1-diphosphate: step 6/9. The chain is Imidazoleglycerol-phosphate dehydratase from Leptospira borgpetersenii serovar Hardjo-bovis (strain JB197).